A 268-amino-acid chain; its full sequence is Indole-3-glycerol phosphate synthase (268 aa).

The protein belongs to the TrpC family.

The catalysed reaction is 1-(2-carboxyphenylamino)-1-deoxy-D-ribulose 5-phosphate + H(+) = (1S,2R)-1-C-(indol-3-yl)glycerol 3-phosphate + CO2 + H2O. It functions in the pathway amino-acid biosynthesis; L-tryptophan biosynthesis; L-tryptophan from chorismate: step 4/5. This is Indole-3-glycerol phosphate synthase from Parafrankia sp. (strain EAN1pec).